We begin with the raw amino-acid sequence, 487 residues long: MPPLDITDERLTREDTGYHKGLHSRQLQMIALGGAIGTGLFLGAGGRLASAGPGLFLVYGICGIFVFLILRALGELVLHRPSSGSFVSYAREFYGEKVAFVAGWMYFLNWAMTGIVDTTAIAHYCHYWRAFQPIPQWTLALIALLVVLSMNLISVRLFGELEFWASLIKVIALVTFLIVGTVFLAGRYKIDGQETGVSLWSSHGGIVPTGLLPIVLVTSGVVFAYAAIELVGIAAGETAEPAKIMPRAINSVVLRIACFYVGSTVLLALLLPYTAYKEHVSPFVTFFSKIGIDAAGSVMNLVVLTAALSSLNAGLYSTGRILRSMAINGSGPRFTAPMSKTGVPYGGILLTAGIGLLGIILNAIKPSQAFEIVLHIAATGVIAAWATIVACQLRLHRMANAGQLQRPKFRMPLSPFSGYLTLAFLAGVLILMYFDEQHGPWMIAATVIGVPALIGGWYLVRNRVTAVAHHAIDHTKSVAVVHSADPI.

The next 12 helical transmembrane spans lie at 26-46 (QLQM…GAGG), 50-70 (SAGP…FLIL), 98-118 (VAFV…IVDT), 133-153 (PIPQ…MNLI), 163-183 (FWAS…GTVF), 214-234 (IVLV…VGIA), 256-276 (IACF…YTAY), 290-310 (IGID…ALSS), 341-361 (TGVP…GIIL), 369-389 (AFEI…ATIV), 414-434 (SPFS…LMYF), and 440-460 (PWMI…WYLV).

It belongs to the amino acid-polyamine-organocation (APC) superfamily. Amino acid transporter (AAT) (TC 2.A.3.1) family.

The protein resides in the cell membrane. In terms of biological role, dual function in both nitrogen assimilation and in protection against acid stress during infection. Involved in asparagine uptake. The chain is L-asparagine permease 2 (ansP2) from Mycobacterium bovis (strain ATCC BAA-935 / AF2122/97).